Consider the following 440-residue polypeptide: Chromosome partition protein MukF (440 aa).

The segment at 208 to 236 is leucine-zipper; the sequence is LSETSGTLRELQDTLEAAGDKLQANLLRI.

The protein belongs to the MukF family. In terms of assembly, interacts, and probably forms a ternary complex, with MukE and MukB via its C-terminal region. The complex formation is stimulated by calcium or magnesium. It is required for an interaction between MukE and MukB.

It localises to the cytoplasm. It is found in the nucleoid. Functionally, involved in chromosome condensation, segregation and cell cycle progression. May participate in facilitating chromosome segregation by condensation DNA from both sides of a centrally located replisome during cell division. Not required for mini-F plasmid partitioning. Probably acts via its interaction with MukB and MukE. Overexpression results in anucleate cells. It has a calcium binding activity. The protein is Chromosome partition protein MukF of Escherichia coli O127:H6 (strain E2348/69 / EPEC).